We begin with the raw amino-acid sequence, 256 residues long: 5-keto-4-deoxy-D-glucarate aldolase (256 aa).

The active-site Proton acceptor is the H50. Q151 provides a ligand contact to substrate. A Mg(2+)-binding site is contributed by E153. The substrate site is built by S178 and D179. Residue D179 coordinates Mg(2+).

It belongs to the HpcH/HpaI aldolase family. KDGluc aldolase subfamily. As to quaternary structure, homohexamer; trimer of dimers. Requires Mg(2+) as cofactor.

The catalysed reaction is 5-dehydro-4-deoxy-D-glucarate = 2-hydroxy-3-oxopropanoate + pyruvate. The enzyme catalyses 2-dehydro-3-deoxy-D-glucarate = 2-hydroxy-3-oxopropanoate + pyruvate. The protein operates within carbohydrate acid metabolism; galactarate degradation; D-glycerate from galactarate: step 2/3. In terms of biological role, catalyzes the reversible retro-aldol cleavage of both 5-keto-4-deoxy-D-glucarate and 2-keto-3-deoxy-D-glucarate to pyruvate and tartronic semialdehyde. This Shigella sonnei (strain Ss046) protein is 5-keto-4-deoxy-D-glucarate aldolase.